We begin with the raw amino-acid sequence, 383 residues long: PqqA peptide cyclase (383 aa).

One can recognise a Radical SAM core domain in the interval 11–226 (PGPPLWLLAE…TNQWREKLAA (216 aa)). Residues Cys25, Cys29, and Cys32 each contribute to the [4Fe-4S] cluster site.

This sequence belongs to the radical SAM superfamily. PqqE family. As to quaternary structure, interacts with PqqD. The interaction is necessary for activity of PqqE. [4Fe-4S] cluster is required as a cofactor.

The catalysed reaction is [PQQ precursor protein] + S-adenosyl-L-methionine = E-Y cross-linked-[PQQ precursor protein] + 5'-deoxyadenosine + L-methionine + H(+). It participates in cofactor biosynthesis; pyrroloquinoline quinone biosynthesis. Its function is as follows. Catalyzes the cross-linking of a glutamate residue and a tyrosine residue in the PqqA protein as part of the biosynthesis of pyrroloquinoline quinone (PQQ). In Azotobacter vinelandii (strain DJ / ATCC BAA-1303), this protein is PqqA peptide cyclase.